An 82-amino-acid polypeptide reads, in one-letter code: UPF0154 protein SPD_1662 (82 aa).

Residues Leu5–Val25 traverse the membrane as a helical segment.

Belongs to the UPF0154 family.

It is found in the cell membrane. This chain is UPF0154 protein SPD_1662, found in Streptococcus pneumoniae serotype 2 (strain D39 / NCTC 7466).